The primary structure comprises 220 residues: Flavin-dependent thymidylate synthase (220 aa).

Positions 1–208 (MKIDILDKGF…PWTFEAFLKY (208 aa)) constitute a ThyX domain. FAD is bound by residues Thr55, 78 to 81 (RHRI), and Glu86. DUMP contacts are provided by residues 75–78 (QWFR), 86–90 (ELSGR), and Arg147. Residues 78–88 (RHRIASYNELS) carry the ThyX motif motif. FAD is bound by residues 163-165 (NAR) and Asn169. Residue Arg174 participates in dUMP binding. Residue Arg174 is the Involved in ionization of N3 of dUMP, leading to its activation of the active site.

It belongs to the thymidylate synthase ThyX family. In terms of assembly, homotetramer. The cofactor is FAD.

It carries out the reaction dUMP + (6R)-5,10-methylene-5,6,7,8-tetrahydrofolate + NADPH + H(+) = dTMP + (6S)-5,6,7,8-tetrahydrofolate + NADP(+). It catalyses the reaction dUMP + formaldehyde + NADPH + H(+) = dTMP + NADP(+) + H2O. It participates in pyrimidine metabolism; dTTP biosynthesis. Catalyzes the reductive methylation of 2'-deoxyuridine-5'-monophosphate (dUMP or deoxyuridylate) to 2'-deoxythymidine-5'-monophosphate (dTMP or deoxythymidylate) while utilizing 5,10-methylenetetrahydrofolate (mTHF) as the methylene donor, and NAD(P)H and FADH(2) as the reductant. This reaction is a critical step in DNA biosynthesis. Can also use formaldehyde instead of mTHF as a direct methylene donor for dTMP synthesis. However, the tighter binding of ThyX to mTHF (KD of 4 uM) compared to formaldehyde (KD of 20 mM) confirms that methylene tetrahydrofolate acts as the biological carbon donor for ThyX, serving as a formaldehyde carrier/transporter and thus avoiding genotoxic effects. This is Flavin-dependent thymidylate synthase from Thermotoga maritima (strain ATCC 43589 / DSM 3109 / JCM 10099 / NBRC 100826 / MSB8).